A 366-amino-acid chain; its full sequence is Bacteriochlorophyll a protein (366 aa).

5 residues coordinate bacteriochlorophyll a: H110, H145, H290, H297, and H298.

In terms of assembly, homotrimer. Each subunit contains 7 molecules of bacteriochlorophyll a.

Intermediary in the transfer of excitation energy from the chlorophyll to the reaction centers. This is Bacteriochlorophyll a protein from Prosthecochloris aestuarii.